A 196-amino-acid polypeptide reads, in one-letter code: Somatotropin (196 aa).

The N-terminal stretch at 1–16 (MDKVILVLLMSLGASS) is a signal peptide. Q17 is modified (pyrrolidone carboxylic acid). H35 provides a ligand contact to Zn(2+). C67 and C169 form a disulfide bridge. Position 178 (E178) interacts with Zn(2+). C186 and C194 are joined by a disulfide.

This sequence belongs to the somatotropin/prolactin family.

The protein localises to the secreted. Growth hormone plays an important role in growth control and is involved in the regulation of several anabolic processes. Implicated as an osmoregulatory substance important for seawater adaptation. This is Somatotropin (gh) from Takifugu rubripes (Japanese pufferfish).